The sequence spans 122 residues: Large ribosomal subunit protein uL14 (122 aa).

Belongs to the universal ribosomal protein uL14 family. As to quaternary structure, part of the 50S ribosomal subunit. Forms a cluster with proteins L3 and L19. In the 70S ribosome, L14 and L19 interact and together make contacts with the 16S rRNA in bridges B5 and B8.

Binds to 23S rRNA. Forms part of two intersubunit bridges in the 70S ribosome. The protein is Large ribosomal subunit protein uL14 of Streptococcus uberis (strain ATCC BAA-854 / 0140J).